Here is a 193-residue protein sequence, read N- to C-terminus: MKTLIRPLVVLFVVLTAVTGLAYPAVMTVFGQAVFPSQANGSLIEQNGKVVGSALIGQSFDAPKYFWGRLSATAPMPYNAAGSGGSNLGPLNPSLADQVKARIAALRDAGTDLSKPVPVDLVTASASGLDPEITPAAAAYQVERVAKARNLTPDAVAQLVAANTAGRQFGVLGEPRVNVLKLNLALDAAQAAH.

A helical transmembrane segment spans residues 7–27; that stretch reads PLVVLFVVLTAVTGLAYPAVM.

This sequence belongs to the KdpC family. The system is composed of three essential subunits: KdpA, KdpB and KdpC.

It localises to the cell inner membrane. Its function is as follows. Part of the high-affinity ATP-driven potassium transport (or Kdp) system, which catalyzes the hydrolysis of ATP coupled with the electrogenic transport of potassium into the cytoplasm. This subunit acts as a catalytic chaperone that increases the ATP-binding affinity of the ATP-hydrolyzing subunit KdpB by the formation of a transient KdpB/KdpC/ATP ternary complex. In Burkholderia orbicola (strain MC0-3), this protein is Potassium-transporting ATPase KdpC subunit.